Reading from the N-terminus, the 420-residue chain is Bile acid-CoA:amino acid N-acyltransferase (420 aa).

Lysine 40 is subject to N6-succinyllysine. Serine 125 carries the phosphoserine modification. Active-site charge relay system residues include cysteine 235 and aspartate 328. 2 positions are modified to N6-succinyllysine: lysine 346 and lysine 350. The active-site Charge relay system is histidine 362. Lysine 409 bears the N6-succinyllysine mark. Serine 418 carries the post-translational modification Phosphoserine.

Belongs to the C/M/P thioester hydrolase family. As to quaternary structure, monomer. Highly expressed in liver, kidney, gallbladder, proximal intestine and distal intestine. Weakly expressed in adrenal gland, lung, brain and muscle.

It is found in the cytoplasm. The protein resides in the cytosol. Its subcellular location is the peroxisome. It carries out the reaction choloyl-CoA + glycine = glycocholate + CoA + H(+). The enzyme catalyses hexadecanoyl-CoA + H2O = hexadecanoate + CoA + H(+). The catalysed reaction is choloyl-CoA + H2O = cholate + CoA + H(+). It catalyses the reaction chenodeoxycholoyl-CoA + H2O = chenodeoxycholate + CoA + H(+). It carries out the reaction eicosanoyl-CoA + H2O = eicosanoate + CoA + H(+). The enzyme catalyses octadecanoyl-CoA + H2O = octadecanoate + CoA + H(+). The catalysed reaction is docosanoyl-CoA + H2O = docosanoate + CoA + H(+). It catalyses the reaction tetracosanoyl-CoA + H2O = tetracosanoate + CoA + H(+). It carries out the reaction hexacosanoyl-CoA + H2O = hexacosanoate + CoA + H(+). The enzyme catalyses dodecanoyl-CoA + H2O = dodecanoate + CoA + H(+). The catalysed reaction is tetradecanoyl-CoA + H2O = tetradecanoate + CoA + H(+). It catalyses the reaction choloyl-CoA + taurine = taurocholate + CoA + H(+). It carries out the reaction chenodeoxycholoyl-CoA + glycine = glycochenodeoxycholate + CoA + H(+). The enzyme catalyses chenodeoxycholoyl-CoA + taurine = taurochenodeoxycholate + CoA + H(+). The catalysed reaction is eicosanoyl-CoA + glycine = N-eicosanoylglycinate + CoA + H(+). It catalyses the reaction hexacosanoyl-CoA + glycine = N-hexacosanoylglycine + CoA + H(+). It carries out the reaction docosanoyl-CoA + glycine = N-docosanoylglycine + CoA + H(+). Catalyzes the amidation of bile acids (BAs) with the amino acid taurine. Selective for taurine conjugation of cholyl CoA and only taurine-conjugated BAs are found in bile. Amidation of BAs in the liver with taurine prior to their excretion into bile is an important biochemical event in bile acid metabolism. This conjugation (or amidation) plays several important biological roles in that it promotes the secretion of BAs and cholesterol into bile and increases the detergent properties of BAs in the intestine, which facilitates lipid and vitamin absorption. May also act as an acyl-CoA thioesterase that regulates intracellular levels of free fatty acids. In vitro, catalyzes the hydrolysis of long- and very long-chain saturated acyl-CoAs to the free fatty acid and coenzyme A (CoASH), and conjugates glycine to these acyl-CoAs. In Mus musculus (Mouse), this protein is Bile acid-CoA:amino acid N-acyltransferase (Baat).